A 93-amino-acid polypeptide reads, in one-letter code: UPF0175 protein AF_0100 (93 aa).

This sequence belongs to the UPF0175 family.

The chain is UPF0175 protein AF_0100 from Archaeoglobus fulgidus (strain ATCC 49558 / DSM 4304 / JCM 9628 / NBRC 100126 / VC-16).